Consider the following 242-residue polypeptide: uncharacterized protein (242 aa).

A Response regulatory domain is found at 3 to 116 (TALVIDDEQF…RLNKTVKRLN (114 aa)). 4-aspartylphosphate is present on aspartate 54. An HTH LytTR-type domain is found at 139 to 240 (IPCIGHNRIV…LKVLKEMLGI (102 aa)).

This is an uncharacterized protein from Vibrio parahaemolyticus serotype O3:K6 (strain RIMD 2210633).